A 234-amino-acid polypeptide reads, in one-letter code: Sugar fermentation stimulation protein homolog (234 aa).

It belongs to the SfsA family.

The sequence is that of Sugar fermentation stimulation protein homolog from Shewanella baltica (strain OS223).